The chain runs to 233 residues: Orotidine 5'-phosphate decarboxylase (233 aa).

Residues aspartate 11, lysine 34, 61 to 70, threonine 117, arginine 179, glutamine 189, glycine 209, and arginine 210 contribute to the substrate site; that span reads DLKLHDIPNT. The active-site Proton donor is lysine 63.

It belongs to the OMP decarboxylase family. Type 1 subfamily. As to quaternary structure, homodimer.

The enzyme catalyses orotidine 5'-phosphate + H(+) = UMP + CO2. The protein operates within pyrimidine metabolism; UMP biosynthesis via de novo pathway; UMP from orotate: step 2/2. Functionally, catalyzes the decarboxylation of orotidine 5'-monophosphate (OMP) to uridine 5'-monophosphate (UMP). This chain is Orotidine 5'-phosphate decarboxylase, found in Streptococcus agalactiae serotype Ia (strain ATCC 27591 / A909 / CDC SS700).